Here is a 176-residue protein sequence, read N- to C-terminus: RNA polymerase sigma factor SigZ (176 aa).

Residues 30–43 carry the Polymerase core binding motif; the sequence is DLLQIVFMKIQVHL. Residues 125 to 144 constitute a DNA-binding region (H-T-H motif); sequence QKELSEKLGISYSGAKSRVQ.

Belongs to the sigma-70 factor family. ECF subfamily.

Functionally, sigma factors are initiation factors that promote the attachment of RNA polymerase to specific initiation sites and are then released. The protein is RNA polymerase sigma factor SigZ (sigZ) of Bacillus subtilis (strain 168).